Consider the following 666-residue polypeptide: MAAVQALPLSIDQNTEASGSQSHTNTRSPVTENTMGSVSSLISGRTYHDKQCRASEFSNKCRKPTNMPNCFKQQEGLLKTNYSSQDFLFNGLPTKKPSTTTSGNNGNYVYVNEDFKEEWHDARVPISPSSDAEDIREERSINGNIRGPPPKLIPISGKLEKNVEKTLIKPTAFKPVVPKKRNPSLQYLVQRNGGPGLSESQSSLNLLFNGNSAGIPEKHNSLSCRNIAHSGTMSDSGRTSLSSLPTSNTNCSHQLDSVSVSMGHINLDNHSNLNGYSDRASRGRTRPSNSDSGRSSSSKSTGSPILNDEILIRELEEKLKDREMELQQLKENLDENEAAICQVYEEKQKRCEQEMEELRQSCALKMKQAAQKAQRLQQVLQLQIFQLQQEKKKLQEDFSQLLQERELLEKRCASFEREQTEFGPRLEETKWEVCQKSGEISLLKQQLKDSQAELAQKSNEILLLRSQFREARCDLQISEEQVQELQDTAHTKTLEMEVCENELQRKKNEAELLREKVSKLDQEVASLREAAVASLRHGLCFCHEKEDPFLLYESDEAKAQRQNADNLQGLQQYVERLREALASERSRYQEQAEHFEDERRKWQEEKEKVIRYQKQLQHNYIQMYQQNRELERDIKQLTVELDAREFNEFDLHGAEIHFEEITATEI.

3 disordered regions span residues 1–35, 227–249, and 266–307; these read MAAVQALPLSIDQNTEASGSQSHTNTRSPVTENTM, IAHSGTMSDSGRTSLSSLPTSNT, and NLDN…PILN. 2 stretches are compositionally biased toward polar residues: residues 11–35 and 227–238; these read IDQNTEASGSQSHTNTRSPVTENTM and IAHSGTMSDSGR. Low complexity-rich tracts occupy residues 239–249 and 286–304; these read TSLSSLPTSNT and RPSNSDSGRSSSSKSTGSP. Residues 305–647 are a coiled coil; sequence ILNDEILIRE…TVELDAREFN (343 aa).

It belongs to the LZTS2 family.

The protein localises to the cytoplasm. Its subcellular location is the cytoskeleton. It localises to the microtubule organizing center. The protein resides in the centrosome. Functionally, negative regulator of katanin-mediated microtubule severing and release from the centrosome. Required for central spindle formation and the completion of cytokinesis. Negative regulator of the Wnt signaling pathway. Represses beta-catenin-mediated transcriptional activation by promoting the nuclear exclusion of beta-catenin. The polypeptide is Leucine zipper putative tumor suppressor 2 homolog (lzts2) (Xenopus laevis (African clawed frog)).